The chain runs to 156 residues: Probable chemoreceptor glutamine deamidase CheD (156 aa).

Belongs to the CheD family.

It carries out the reaction L-glutaminyl-[protein] + H2O = L-glutamyl-[protein] + NH4(+). In terms of biological role, probably deamidates glutamine residues to glutamate on methyl-accepting chemotaxis receptors (MCPs), playing an important role in chemotaxis. In Bdellovibrio bacteriovorus (strain ATCC 15356 / DSM 50701 / NCIMB 9529 / HD100), this protein is Probable chemoreceptor glutamine deamidase CheD.